Reading from the N-terminus, the 490-residue chain is Ribulose bisphosphate carboxylase large chain (490 aa).

Substrate contacts are provided by Asn127 and Thr177. The active-site Proton acceptor is the Lys179. Lys181 is a binding site for substrate. The Mg(2+) site is built by Lys205, Asp207, and Glu208. Lys205 bears the N6-carboxylysine mark. His297 functions as the Proton acceptor in the catalytic mechanism. Substrate-binding residues include Arg298, His330, and Ser382.

Belongs to the RuBisCO large chain family. Type I subfamily. In terms of assembly, heterohexadecamer of 8 large chains and 8 small chains. Mg(2+) serves as cofactor.

It localises to the plastid. The protein localises to the chloroplast. The catalysed reaction is 2 (2R)-3-phosphoglycerate + 2 H(+) = D-ribulose 1,5-bisphosphate + CO2 + H2O. It catalyses the reaction D-ribulose 1,5-bisphosphate + O2 = 2-phosphoglycolate + (2R)-3-phosphoglycerate + 2 H(+). Its function is as follows. RuBisCO catalyzes two reactions: the carboxylation of D-ribulose 1,5-bisphosphate, the primary event in carbon dioxide fixation, as well as the oxidative fragmentation of the pentose substrate in the photorespiration process. Both reactions occur simultaneously and in competition at the same active site. This chain is Ribulose bisphosphate carboxylase large chain, found in Thalassiosira nordenskioeldii (Marine diatom).